We begin with the raw amino-acid sequence, 106 residues long: NADH dehydrogenase [ubiquinone] iron-sulfur protein 5 (106 aa).

One can recognise a CHCH domain in the interval 30–74 (AGRCHAFEKEWIECAHGIGYTRAEKECKIEYDDFVECLLRQKTMR). 2 short sequence motifs (cx9C motif) span residues 33-43 (CHAFEKEWIEC) and 56-66 (CKIEYDDFVEC). Cystine bridges form between cysteine 33–cysteine 66 and cysteine 43–cysteine 56. Residues 84–106 (DKLIKEGKYTPPPHHIGKGEPRP) form a disordered region.

Belongs to the complex I NDUFS5 subunit family. As to quaternary structure, mammalian complex I is composed of 45 different subunits. This is a component of the iron-sulfur (IP) fragment of the enzyme.

It is found in the mitochondrion inner membrane. It localises to the mitochondrion intermembrane space. Functionally, accessory subunit of the mitochondrial membrane respiratory chain NADH dehydrogenase (Complex I), that is believed not to be involved in catalysis. Complex I functions in the transfer of electrons from NADH to the respiratory chain. The immediate electron acceptor for the enzyme is believed to be ubiquinone. This Gorilla gorilla gorilla (Western lowland gorilla) protein is NADH dehydrogenase [ubiquinone] iron-sulfur protein 5 (NDUFS5).